Consider the following 112-residue polypeptide: Putative acyl carrier protein, mitochondrial (112 aa).

The N-terminal 28 residues, Met1–Tyr28, are a transit peptide targeting the mitochondrion. A Carrier domain is found at Pro33–Pro109. Ser69 carries the post-translational modification O-(pantetheine 4'-phosphoryl)serine.

It belongs to the acyl carrier protein (ACP) family. In terms of processing, 4'-phosphopantetheine is transferred from CoA to a specific serine of apo-ACP by acpS. This modification is essential for activity because fatty acids are bound in thioester linkage to the sulfhydryl of the prosthetic group.

It is found in the mitochondrion. It functions in the pathway lipid metabolism; fatty acid biosynthesis. Functionally, carrier of the growing fatty acid chain in fatty acid biosynthesis. May be involved in the synthesis of very-long-chain fatty acids. This is Putative acyl carrier protein, mitochondrial from Schizosaccharomyces pombe (strain 972 / ATCC 24843) (Fission yeast).